The chain runs to 579 residues: MSEKLPPGTLCAVCDDIATGKHYSVASCNGCKTFFRRALVNNREFVCQGNKDCPVNKGVRCACRYCRLQKCLAVGMDKNSIQNDRDRIGYTKRKRRHDDNDMEGGVHHSEHIRDGSSGSPQMNDESPESMDMKDIKIDLNCLDPIADRLTTLENNFTLLLSRCADLHSYATLEDALNAPSRFMQPISCEWSDNVVLTNRDDKLPFWRQRLIALYIDWAKTFSTFRSLPYADKVAMVTNHASSFMIMCEAFRTPEHMKSDVVRKRPDLPNIVTSNSGSGCSRVSSVAGSLVSNGEDVHDDLTNLLHAACIQQSINKGIMFGENSSDDKILLNLPIREIKKEPLEVPSTEGMIQLPTEYGNLPADYASWIPQDYGHPTAGHEGKSDMHNFFEARDFCVGRPSSCNLNERSMKTVSMLESRNFQSPSANNSSLSGITPVLTMMIDLVMKPFRQLNFSTTEFALLQAIMFFDPDTEGLDSASQRNVVAEQKKLLAVLFRHLQKAYNPQAASERYASIILRMPSIRRAAAKKNESLQVLDMLQMHEINSLVKETSLGPRPSNVQQRMGIGGGAGGCLTFPSQED.

Positions 8–83 (GTLCAVCDDI…VGMDKNSIQN (76 aa)) form a DNA-binding region, nuclear receptor. 2 NR C4-type zinc fingers span residues 11-31 (CAVCDDIATGKHYSVASCNGC) and 47-71 (CQGNKDCPVNKGVRCACRYCRLQKC). The tract at residues 87–128 (RIGYTKRKRRHDDNDMEGGVHHSEHIRDGSSGSPQMNDESPE) is disordered. Over residues 104–114 (GGVHHSEHIRD) the composition is skewed to basic and acidic residues. The region spanning 164 to 553 (ADLHSYATLE…SLVKETSLGP (390 aa)) is the NR LBD domain.

This sequence belongs to the nuclear hormone receptor family.

Its subcellular location is the nucleus. Functionally, orphan nuclear receptor. This is Nuclear hormone receptor family member nhr-47 (nhr-47) from Caenorhabditis elegans.